Here is a 102-residue protein sequence, read N- to C-terminus: Large ribosomal subunit protein uL23 (102 aa).

It belongs to the universal ribosomal protein uL23 family. In terms of assembly, part of the 50S ribosomal subunit. Contacts protein L29, and trigger factor when it is bound to the ribosome.

In terms of biological role, one of the early assembly proteins it binds 23S rRNA. One of the proteins that surrounds the polypeptide exit tunnel on the outside of the ribosome. Forms the main docking site for trigger factor binding to the ribosome. The sequence is that of Large ribosomal subunit protein uL23 from Methylobacillus flagellatus (strain ATCC 51484 / DSM 6875 / VKM B-1610 / KT).